We begin with the raw amino-acid sequence, 92 residues long: C-C motif chemokine 3 (92 aa).

The signal sequence occupies residues 1–23 (MKVSTTALAVLLCTMTLCNQVFS). 2 disulfide bridges follow: Cys34–Cys57 and Cys35–Cys73.

The protein belongs to the intercrine beta (chemokine CC) family. Self-associates. Also heterodimer of MIP-1-alpha(4-69) and MIP-1-beta(3-69). Interacts with CCR1. As to expression, expressed in lung, spleen, and pancreas.

It localises to the secreted. In terms of biological role, monokine with inflammatory and chemokinetic properties. Binds to CCR1, CCR4 and CCR5. One of the major HIV-suppressive factors produced by CD8+ T-cells. Recombinant MIP-1-alpha induces a dose-dependent inhibition of different strains of HIV-1, HIV-2, and simian immunodeficiency virus (SIV). The sequence is that of C-C motif chemokine 3 (Ccl3) from Mus musculus (Mouse).